The following is a 174-amino-acid chain: UPF0316 protein lwe1794 (174 aa).

3 helical membrane-spanning segments follow: residues glycine 4 to valine 24, leucine 36 to leucine 56, and isoleucine 62 to isoleucine 82.

This sequence belongs to the UPF0316 family.

It is found in the cell membrane. The chain is UPF0316 protein lwe1794 from Listeria welshimeri serovar 6b (strain ATCC 35897 / DSM 20650 / CCUG 15529 / CIP 8149 / NCTC 11857 / SLCC 5334 / V8).